A 1370-amino-acid chain; its full sequence is Putative Polycomb group protein ASXL2 (1370 aa).

In terms of domain architecture, HTH HARE-type spans 11 to 86 (RTWAEAAKTV…RMGVYTLKKD (76 aa)). Residues 92–216 (KELSECSEES…DSVPAKPGQM (125 aa)) are disordered. A compositionally biased stretch (low complexity) spans 103-120 (DGQSDSHSSDNSSSSDGG). The segment covering 141 to 152 (PPSPPSGCPSPT) has biased composition (pro residues). Serine 150 is modified (phosphoserine). The Nuclear localization signal signature appears at 178–182 (QQKKK). Positions 186–198 (CRPSMSISNQHLS) are enriched in polar residues. The DEUBAD domain occupies 229–338 (PDSILVNTNL…FENYYGQSSG (110 aa)). The LXXLL motif signature appears at 258–262 (LLLLL). 2 disordered regions span residues 340-487 (SLED…AGLQ) and 516-535 (QESL…SSWE). The segment covering 398-412 (QKEENQDEARPDSKS) has biased composition (basic and acidic residues). 4 positions are modified to phosphoserine: serine 477, serine 524, serine 553, and serine 590. Arginine 594 carries the post-translational modification Asymmetric dimethylarginine. Serine 601 carries the phosphoserine modification. Residues 643–652 (IPGPGPGGGQ) are compositionally biased toward gly residues. Disordered stretches follow at residues 643–734 (IPGP…LASS), 805–891 (PKAG…SSIP), and 1103–1175 (GHAD…VSEQ). Composition is skewed to polar residues over residues 719-734 (AQLQ…LASS) and 830-839 (MTSSPVTTAS). A compositionally biased stretch (low complexity) spans 849–870 (SGTATSTGSAPSSSTLPAASSL). Residues 871–891 (KTPGTSANMNGPISRTSSSIP) show a composition bias toward polar residues. Acidic residues predominate over residues 1119-1131 (DESDEDRVGDEQE). 2 positions are modified to phosphoserine: serine 1121 and serine 1254. Residues 1332–1369 (PSKCYCRLKAMIMCKGCGAFCHDDCIGPSKLCVSCLVV) form a PHD-type; atypical zinc finger.

Belongs to the Asx family. Core component of the polycomb repressive deubiquitinase (PR-DUB) complex, at least composed of BAP1, one of ASXL1, ASXL2 or (probably) ASXL3, and one of MBD5 or MBD6. Distinct combinations of ASXL and MBD proteins may preferentially bind specific histone modification marks. The PR-DUB core associates with a number of accessory proteins, including FOXK1, FOXK2, KDM1B, HCFC1 and OGT; KDM1B specifically associates with ASXL2 PR-DUB complexes. Interacts (via PHD domain) with MBD5 and MBD6 (via MBD domain); the interaction is probably direct and mediates association of MBD proteins with the PR-DUB core. Interacts with PPARA and PPARG.

The protein resides in the nucleus. Its function is as follows. Putative Polycomb group (PcG) protein. PcG proteins act by forming multiprotein complexes, which are required to maintain the transcriptionally repressive state of homeotic genes throughout development. PcG proteins are not required to initiate repression, but to maintain it during later stages of development. They probably act via methylation of histones, rendering chromatin heritably changed in its expressibility. Involved in transcriptional regulation mediated by ligand-bound nuclear hormone receptors, such as peroxisome proliferator-activated receptor gamma (PPARG). Acts as a coactivator for PPARG and enhances its adipocyte differentiation-inducing activity; the function seems to involve differential recruitment of acetylated and methylated histone H3. Non-catalytic component of the PR-DUB complex, a complex that specifically mediates deubiquitination of histone H2A monoubiquitinated at 'Lys-119' (H2AK119ub1). The PR-DUB complex is an epigenetic regulator of gene expression and acts as a transcriptional coactivator, affecting genes involved in development, cell communication, signaling, cell proliferation and cell viability. ASXL1, ASXL2 and ASXL3 function redundantly in the PR-DUB complex. The ASXL proteins are essential for chromatin recruitment and transcriptional activation of associated genes. ASXL1 and ASXL2 are important for BAP1 protein stability. The chain is Putative Polycomb group protein ASXL2 (Asxl2) from Mus musculus (Mouse).